A 767-amino-acid chain; its full sequence is Cation/H(+) antiporter 27 (767 aa).

11 consecutive transmembrane segments (helical) span residues 39–59, 63–83, 99–119, 135–155, 173–193, 205–225, 242–262, 280–300, 323–343, 371–391, and 415–435; these read LPLL…FQFL, FGKF…PSVI, VYII…ITTC, INGI…AILI, HVAI…LSSL, LASM…NIAI, VLQM…MLWM, ICVL…PYFF, IGCF…GLNI, IALP…VGFI, and KSFG…IVIV.

It belongs to the monovalent cation:proton antiporter 2 (CPA2) transporter (TC 2.A.37) family. CHX (TC 2.A.37.4) subfamily. As to expression, specifically expressed in pollen.

Its subcellular location is the membrane. Functionally, may operate as a cation/H(+) antiporter. This chain is Cation/H(+) antiporter 27 (CHX27), found in Arabidopsis thaliana (Mouse-ear cress).